A 1681-amino-acid polypeptide reads, in one-letter code: Sodium channel protein type 7 subunit alpha (1681 aa).

Residues 1-118 (MLTSPEPKGL…RRAAIKALVH (118 aa)) are Cytoplasmic-facing. An I repeat occupies 101–402 (TLSPLNSLRR…ILTMTYEKEK (302 aa)). Residues 119-138 (PLFRLLILISVLTDSILMCM) form a helical membrane-spanning segment. Residues 139 to 142 (SNLP) lie on the Extracellular side of the membrane. A helical transmembrane segment spans residues 143–168 (EWILAIENTLLGIYAFEILVKVIARG). The Cytoplasmic segment spans residues 169–179 (IWAGSFSFLGD). The helical transmembrane segment at 180 to 197 (LWNWLDFSVTLFELITRF) threads the bilayer. The Extracellular segment spans residues 198 to 201 (SPLS). A helical transmembrane segment spans residues 202 to 220 (SFLMLKTIRTFRILKIIPL). The Cytoplasmic portion of the chain corresponds to 221–238 (NHGLQSIVMTLAQCLKKL). The chain crosses the membrane as a helical span at residues 239-260 (FGAIALALFFLAVFSLLGMGLF). Residues 261-339 (MGNLKHKCLR…PDNGFTSFDN (79 aa)) are Extracellular-facing. Cys268 and Cys308 form a disulfide bridge. Asn277, Asn282, Asn288, and Asn310 each carry an N-linked (GlcNAc...) asparagine glycan. Positions 340-367 (FGWSLLAMFRLMTQDYPELLYHQILYAS) form an intramembrane region, pore-forming. Position 368 (Gly368) is a topological domain, extracellular. A helical membrane pass occupies residues 369–408 (KVYMIFFVMISFWFAFYLTSLFLGILTMTYEKEKQRACEE). The Cytoplasmic portion of the chain corresponds to 409-506 (SGGLDPKCQQ…EFADRVITHP (98 aa)). The II repeat unit spans residues 488–757 (CSPCWVKLNE…QLAMARIKSG (270 aa)). Residues 507 to 522 (LADLFLVICIVLNICF) form a helical membrane-spanning segment. At 523 to 531 (LALEHFPMS) the chain is on the extracellular side. The helical transmembrane segment at 532–560 (EELRSLLHVGNLVFIGIYTIEMILKIIAM) threads the bilayer. Residues 561–569 (HPYGYFQIS) are Cytoplasmic-facing. The helical transmembrane segment at 570 to 587 (WNIFDSILVVLELTEILL) threads the bilayer. Over 588–593 (ADVEGL) the chain is Extracellular. The chain crosses the membrane as a helical span at residues 594–609 (AVLITVPLIFIKLGKY). At 610 to 626 (GPPFKSLMRILGSSLMA) the chain is on the cytoplasmic side. Residues 627–655 (LKDLVLLLCIFVYFSAVFGMKLFGRSYKD) form a helical membrane-spanning segment. Over 656–673 (CVCHIKEDCQPQRWHMSD) the chain is Extracellular. 2 cysteine pairs are disulfide-bonded: Cys658/Cys664 and Cys696/Cys705. Positions 674–700 (FLHAYMTVFRILCGEWIETLWECMEVA) form an intramembrane region, pore-forming. Residue Gly701 is a topological domain, extracellular. A helical transmembrane segment spans residues 702–732 (QAWCIPFYMMVILIGNLLILYLFVTLVSSFS). Over 733–934 (YYDATSEVNK…KTCCKIVENS (202 aa)) the chain is Cytoplasmic. Polar residues predominate over residues 806–834 (YKDQSSSTEKTPVTESESQSLIASPSASE). The disordered stretch occupies residues 806–875 (YKDQSSSTEK…MKQSSSSECS (70 aa)). Ser843 carries the phosphoserine modification. Residues 916–1224 (NGKIWKNIRK…KKQYRALKKL (309 aa)) form an III repeat. A helical membrane pass occupies residues 935-953 (WFECFIGLVTLLCTGTLAL). The Extracellular segment spans residues 954 to 961 (EDIYIDQR). The chain crosses the membrane as a helical span at residues 962 to 990 (KTTKILLEYADMIFAYIFILEMLLKWVAY). Residues 991-998 (GFKAFFSN) are Cytoplasmic-facing. Residues 999 to 1020 (NWYKLDFMVVIVFCLSLIGKTR) traverse the membrane as a helical segment. Glu1021 is a topological domain (extracellular). A helical transmembrane segment spans residues 1022–1040 (DLNPLTSIKFLRALRVLSQ). Over 1041 to 1055 (FERMKVVLRALIKTT) the chain is Cytoplasmic. The chain crosses the membrane as a helical span at residues 1056 to 1080 (LPTVSVFLVCLMIWLLFSVIGVQLF). Residues 1081-1127 (AGKFYECIDPTKGERFPVFEVMNKSQCEKLLFNESMPWENAKLNFDN) lie on the Extracellular side of the membrane. A disulfide bond links Cys1087 and Cys1107. Residues Asn1103 and Asn1113 are each glycosylated (N-linked (GlcNAc...) asparagine). The pore-forming intramembrane region spans 1128–1154 (VGNGFLSLLQVATFNGWISIMNSAIDS). Residues 1155–1167 (VGVNMQPSFEYNL) are Extracellular-facing. The chain crosses the membrane as a helical span at residues 1168–1202 (YMYSYFIIFVIFGLFLPLCMLIGVIIRNFNKQKIK). At 1203–1250 (QGGSNIFITVKQKKQYRALKKLLYADVQKPTPRPRNKFQGFLFDLVTH) the chain is on the cytoplasmic side. The stretch at 1233–1531 (TPRPRNKFQG…WNRFDPDRTQ (299 aa)) is one IV repeat. A helical transmembrane segment spans residues 1251-1272 (RVFNVIIILLICFQATTIMIQK). At 1273-1276 (DEQS) the chain is on the extracellular side. The helical transmembrane segment at 1277–1305 (PQMETAIFWMNSIFVMLFTLECILKLTAF) threads the bilayer. Over 1306-1312 (RCHYFTS) the chain is Cytoplasmic. Residues 1313 to 1338 (AWNVHDFMVVIFSITGLLLPLTIGQY) traverse the membrane as a helical segment. The Extracellular segment spans residues 1339 to 1341 (FVP). The chain crosses the membrane as a helical span at residues 1342 to 1362 (PSLVQLILLSRVIHILRPGKG). Residues 1363–1377 (PKVFHDLMLPLILAL) are Cytoplasmic-facing. Residues 1378 to 1402 (PALLNISLLIFLVMFIYAIFGMYNF) traverse the membrane as a helical segment. Residues 1403 to 1420 (AYVKKEAGINDVSNFETF) are Extracellular-facing. The segment at residues 1421–1444 (GSSMLCLFQVTTFSGWDGMLDAIF) is an intramembrane region (pore-forming). Residues 1445–1468 (NSQWSDCDPDKINPGTQVKGDCGS) lie on the Extracellular side of the membrane. Residues Cys1451 and Cys1466 are joined by a disulfide bond. A helical membrane pass occupies residues 1469–1504 (PSVGISYFVSYILISWLIIVNMYIVLIMEFLSIPSQ). Over 1505-1681 (KKSRTLSEDD…EEKASIQTQI (177 aa)) the chain is Cytoplasmic. Residues 1647-1662 (NVSDTPAIDDRRDDLT) show a composition bias toward basic and acidic residues. The segment at 1647–1681 (NVSDTPAIDDRRDDLTSKGAHSGKIEEKASIQTQI) is disordered.

It belongs to the sodium channel (TC 1.A.1.10) family. SCN7A subfamily. The sodium channel formed by SCN7A is probably a heterooligomeric complex consisting of the ion conducting pore forming alpha subunit SCN7A and regulatory beta subunits such as SCN3B. Interacts with ATP1A1; activates ATP1A1 and thereby indirectly signals to nearby neurons to regulate sodium homeostasis. Not tissue specific but widely expressed. Expressed in regions of the central nervous system that control body fluid ionic balance.

The protein resides in the cell membrane. The catalysed reaction is Na(+)(in) = Na(+)(out). Its function is as follows. Sodium leak channel functioning as an osmosensor regulating sodium ion levels in various tissues and organs. While most sodium channels are voltage-gated, SCN7A is not and lets sodium flow through membrane along its concentration gradient. In glial cells of the central nervous system, senses body-fluid sodium levels and controls salt intake behavior as well as voluntary water intake through activation of nearby neurons to maintain appropriate sodium levels in the body. By mediating sodium influx into keratinocytes, also plays a role in skin barrier homeostasis. This Mus musculus (Mouse) protein is Sodium channel protein type 7 subunit alpha.